The sequence spans 279 residues: Diaminopimelate epimerase (279 aa).

N13, Q46, and N66 together coordinate substrate. The active-site Proton donor is C75. Substrate is bound by residues 76–77 (GN), N161, N194, and 212–213 (ER). Catalysis depends on C221, which acts as the Proton acceptor. A substrate-binding site is contributed by 222-223 (GT).

Belongs to the diaminopimelate epimerase family. As to quaternary structure, homodimer.

The protein resides in the cytoplasm. The catalysed reaction is (2S,6S)-2,6-diaminopimelate = meso-2,6-diaminopimelate. It functions in the pathway amino-acid biosynthesis; L-lysine biosynthesis via DAP pathway; DL-2,6-diaminopimelate from LL-2,6-diaminopimelate: step 1/1. Its function is as follows. Catalyzes the stereoinversion of LL-2,6-diaminopimelate (L,L-DAP) to meso-diaminopimelate (meso-DAP), a precursor of L-lysine and an essential component of the bacterial peptidoglycan. This is Diaminopimelate epimerase from Alkalilimnicola ehrlichii (strain ATCC BAA-1101 / DSM 17681 / MLHE-1).